The following is a 340-amino-acid chain: ATP-dependent 6-phosphofructokinase (340 aa).

An ATP-binding site is contributed by Gly-11. Position 21–25 (21–25 (RAVVR)) interacts with ADP. ATP is bound by residues 72-73 (RY) and 102-105 (GDGS). Asp-103 contacts Mg(2+). 125-127 (TID) is a substrate binding site. The Proton acceptor role is filled by Asp-127. Residue Arg-154 participates in ADP binding. Residues Arg-162 and 169 to 171 (MGR) contribute to the substrate site. Residues 185–187 (GAD), Lys-211, and 213–215 (KNH) each bind ADP. Residues Glu-222, Arg-244, and 250-253 (HIQR) each bind substrate.

Belongs to the phosphofructokinase type A (PFKA) family. ATP-dependent PFK group I subfamily. Prokaryotic clade 'B1' sub-subfamily. In terms of assembly, homotetramer. Mg(2+) is required as a cofactor.

It localises to the cytoplasm. The enzyme catalyses beta-D-fructose 6-phosphate + ATP = beta-D-fructose 1,6-bisphosphate + ADP + H(+). It participates in carbohydrate degradation; glycolysis; D-glyceraldehyde 3-phosphate and glycerone phosphate from D-glucose: step 3/4. Allosterically activated by ADP and other diphosphonucleosides, and allosterically inhibited by phosphoenolpyruvate. Catalyzes the phosphorylation of D-fructose 6-phosphate to fructose 1,6-bisphosphate by ATP, the first committing step of glycolysis. The protein is ATP-dependent 6-phosphofructokinase of Lactococcus lactis subsp. lactis (Streptococcus lactis).